Reading from the N-terminus, the 475-residue chain is Ankyrin repeat, SAM and basic leucine zipper domain-containing protein 1 (475 aa).

Positions M1–W25 are disordered. 3 positions are modified to phosphoserine: S17, S18, and S20. 6 ANK repeats span residues E45–T74, Y78–F107, D110–V144, R148–T177, N181–I210, and D214–G243. One can recognise an SAM domain in the interval S272–E334.

In terms of assembly, interacts with DDX4, PIWIL1, RANBP9 and TDRD1.

It is found in the cytoplasm. Functionally, plays a central role during spermatogenesis by repressing transposable elements and preventing their mobilization, which is essential for the germline integrity. Acts via the piRNA metabolic process, which mediates the repression of transposable elements during meiosis by forming complexes composed of piRNAs and Piwi proteins and governs the methylation and subsequent repression of transposons. Its association with pi-bodies suggests a participation in the primary piRNAs metabolic process. Required prior to the pachytene stage to facilitate the production of multiple types of piRNAs, including those associated with repeats involved in the regulation of retrotransposons. May act by mediating protein-protein interactions during germ cell maturation. This chain is Ankyrin repeat, SAM and basic leucine zipper domain-containing protein 1 (ASZ1), found in Bos taurus (Bovine).